Reading from the N-terminus, the 274-residue chain is Large ribosomal subunit protein uL2cz/uL2cy (274 aa).

Residues 224–274 are disordered; sequence NPVDHPHGGGEGRAPIGRKKPTTPWGYPALGRRSRKRNKYSDNLILRRRSK.

It belongs to the universal ribosomal protein uL2 family. As to quaternary structure, part of the 50S ribosomal subunit.

It is found in the plastid. The protein resides in the chloroplast. This chain is Large ribosomal subunit protein uL2cz/uL2cy (rpl2-A), found in Panax ginseng (Korean ginseng).